The primary structure comprises 539 residues: Serine/threonine-protein kinase BUR1 (539 aa).

The segment covering 1 to 15 (MEKLSETTPNGTSPR) has biased composition (polar residues). The tract at residues 1-27 (MEKLSETTPNGTSPRTFALNHSRPRSS) is disordered. The 303-residue stretch at 37–339 (YELLGKLGEG…AVDALQHPWF (303 aa)) folds into the Protein kinase domain. ATP-binding positions include 43–51 (LGEGTFGEV) and lysine 66. The active-site Proton acceptor is the aspartate 169. Residues 370–539 (AALPPAPKGG…DRPDHNGYRR (170 aa)) are disordered. Basic and acidic residues-rich tracts occupy residues 414–428 (NGPD…RERG), 471–514 (NRDD…DRGT), and 521–539 (PRHD…GYRR).

This sequence belongs to the protein kinase superfamily. CMGC Ser/Thr protein kinase family. CDC2/CDKX subfamily.

It is found in the nucleus. The catalysed reaction is L-seryl-[protein] + ATP = O-phospho-L-seryl-[protein] + ADP + H(+). It catalyses the reaction L-threonyl-[protein] + ATP = O-phospho-L-threonyl-[protein] + ADP + H(+). The enzyme catalyses [DNA-directed RNA polymerase] + ATP = phospho-[DNA-directed RNA polymerase] + ADP + H(+). Serine/threonine-protein kinase involved in transcription regulation. Phosphorylates the UBC2/RAD6 ubiquitin-conjugating enzyme (E2), leading to monoubiquitination of histone H2B and the silencing of telomeric-associated genes. Also required for histone H3 methylation. Necessary for the recovery from pheromone-induced growth arrest in the cell cycle G1 phase. The polypeptide is Serine/threonine-protein kinase BUR1 (BUR1) (Gibberella zeae (strain ATCC MYA-4620 / CBS 123657 / FGSC 9075 / NRRL 31084 / PH-1) (Wheat head blight fungus)).